Consider the following 510-residue polypeptide: Probable ADP-ribosylation factor-binding protein C1F3.05 (510 aa).

One can recognise a VHS domain in the interval 14–150 (ATDQFNLEPN…LMAFRGYKFP (137 aa)). The 125-residue stretch at 177-301 (LEAHKAKLQE…VIEECSNSDL (125 aa)) folds into the GAT domain. In terms of domain architecture, GAE spans 391-510 (TNSSLTSILQ…VEQGESHLPL (120 aa)).

It is found in the golgi apparatus. It localises to the trans-Golgi network. May play a role in the regulation of membrane traffic through the trans-Golgi network. In Schizosaccharomyces pombe (strain 972 / ATCC 24843) (Fission yeast), this protein is Probable ADP-ribosylation factor-binding protein C1F3.05.